The following is a 138-amino-acid chain: Ribosome maturation factor RimP (138 aa).

This sequence belongs to the RimP family.

It localises to the cytoplasm. Its function is as follows. Required for maturation of 30S ribosomal subunits. This Campylobacter curvus (strain 525.92) protein is Ribosome maturation factor RimP.